A 152-amino-acid polypeptide reads, in one-letter code: Small ribosomal subunit protein uS19z (152 aa).

This sequence belongs to the universal ribosomal protein uS19 family.

Its subcellular location is the cytoplasm. The polypeptide is Small ribosomal subunit protein uS19z (RPS15B) (Arabidopsis thaliana (Mouse-ear cress)).